A 277-amino-acid chain; its full sequence is Large ribosomal subunit protein uL2 (277 aa).

Residues 222-277 (GVAMNPVDHPHGGGEGRTSGGRHPVTPWGKPTKGKKTRSNKATDKFIMRSRHQRKK) form a disordered region.

Belongs to the universal ribosomal protein uL2 family. Part of the 50S ribosomal subunit. Forms a bridge to the 30S subunit in the 70S ribosome.

Functionally, one of the primary rRNA binding proteins. Required for association of the 30S and 50S subunits to form the 70S ribosome, for tRNA binding and peptide bond formation. It has been suggested to have peptidyltransferase activity; this is somewhat controversial. Makes several contacts with the 16S rRNA in the 70S ribosome. This is Large ribosomal subunit protein uL2 from Brucella ovis (strain ATCC 25840 / 63/290 / NCTC 10512).